The following is a 1020-amino-acid chain: Inner tegument protein (1020 aa).

The interval 539–1020 (WGVRIPDRDT…EIDAIFNNTK (482 aa)) is interaction with large tegument protein.

Belongs to the herpesviridae inner tegument protein family. As to quaternary structure, interacts (via C-terminus) with the large tegument protein/LTP (via N-terminus).

The protein localises to the virion tegument. It localises to the host cytoplasm. It is found in the host nucleus. Its subcellular location is the host Golgi apparatus. The protein resides in the host trans-Golgi network. Its function is as follows. Plays an essential role in cytoplasmic secondary envelopment during viral egress. Interacts with the capsid via the large tegument protein/LTP and participates in its transport to the host trans-Golgi network (TGN) where secondary envelopment occurs. Modulates tegumentation and capsid accumulation at the viral assembly complex. This is Inner tegument protein from Equine herpesvirus 1 (strain Ab4p) (EHV-1).